The following is a 255-amino-acid chain: Phosphoribosylaminoimidazole-succinocarboxamide synthase A (255 aa).

Belongs to the SAICAR synthetase family.

It catalyses the reaction 5-amino-1-(5-phospho-D-ribosyl)imidazole-4-carboxylate + L-aspartate + ATP = (2S)-2-[5-amino-1-(5-phospho-beta-D-ribosyl)imidazole-4-carboxamido]succinate + ADP + phosphate + 2 H(+). Its pathway is purine metabolism; IMP biosynthesis via de novo pathway; 5-amino-1-(5-phospho-D-ribosyl)imidazole-4-carboxamide from 5-amino-1-(5-phospho-D-ribosyl)imidazole-4-carboxylate: step 1/2. In Bradyrhizobium diazoefficiens (strain JCM 10833 / BCRC 13528 / IAM 13628 / NBRC 14792 / USDA 110), this protein is Phosphoribosylaminoimidazole-succinocarboxamide synthase A (purC1).